The following is a 622-amino-acid chain: Chaperone protein HscA homolog (622 aa).

Belongs to the heat shock protein 70 family.

In terms of biological role, chaperone involved in the maturation of iron-sulfur cluster-containing proteins. Has a low intrinsic ATPase activity which is markedly stimulated by HscB. The sequence is that of Chaperone protein HscA homolog from Burkholderia cenocepacia (strain ATCC BAA-245 / DSM 16553 / LMG 16656 / NCTC 13227 / J2315 / CF5610) (Burkholderia cepacia (strain J2315)).